We begin with the raw amino-acid sequence, 462 residues long: Sensor histidine kinase ZraS (462 aa).

Over 1-14 the chain is Cytoplasmic; that stretch reads MNVMRLSKDSVAVG. The helical transmembrane segment at 15–35 threads the bilayer; sequence LSWLLTGLILLLVCLFSALIV. At 36–197 the chain is on the periplasmic side; sequence RDYGRENEAA…ADHARGLRNM (162 aa). A helical membrane pass occupies residues 198–218; it reads VIMLCAAGVVMAATVLAQFWF. Topologically, residues 219–462 are cytoplasmic; that stretch reads RRYQRSRKQL…VNGQQKDEQG (244 aa). In terms of domain architecture, Histidine kinase spans 247–455; it reads GVAHEIRNPL…LFTFYLPVNG (209 aa). His250 is modified (phosphohistidine; by autocatalysis).

In terms of processing, autophosphorylated.

It is found in the cell inner membrane. The catalysed reaction is ATP + protein L-histidine = ADP + protein N-phospho-L-histidine.. Its activity is regulated as follows. Activity of the ZraS/ZraR two-component system is repressed by the zinc-bound form of ZraP, which probably interacts with the periplasmic region of ZraS. In terms of biological role, part of the Zra signaling pathway, an envelope stress response (ESR) system composed of the periplasmic accessory protein ZraP, the histidine kinase ZraS and the transcriptional regulator ZraR. The ZraPSR system contributes to antibiotic resistance and is important for membrane integrity in the presence of membrane-targeting biocides. ZraS is a member of the two-component regulatory system ZraS/ZraR. Functions as a membrane-associated sensor kinase that phosphorylates ZraR in response to high concentrations of Zn(2+) or Pb(2+) in the medium. The polypeptide is Sensor histidine kinase ZraS (zraS) (Klebsiella oxytoca).